Reading from the N-terminus, the 160-residue chain is Nucleotide-binding protein AHA_1129 (160 aa).

Belongs to the YajQ family.

Its function is as follows. Nucleotide-binding protein. This Aeromonas hydrophila subsp. hydrophila (strain ATCC 7966 / DSM 30187 / BCRC 13018 / CCUG 14551 / JCM 1027 / KCTC 2358 / NCIMB 9240 / NCTC 8049) protein is Nucleotide-binding protein AHA_1129.